The following is a 158-amino-acid chain: MFRPILILTILSCVLAYHQYRELKCSTPTNSIRGGPDRAECHLVLKAEELETGRPVPTGLGCWQEDHDGEEREYCDIVCPKSHTVFISYIDQGHRACFNFITYQVEKRNDEHVLWRSGKCLNSTVNYRIGCKFDDPFETQFKSDNEIFAHLRARARRV.

An N-terminal signal peptide occupies residues 1-16 (MFRPILILTILSCVLA). The N-linked (GlcNAc...) asparagine glycan is linked to asparagine 122.

This is an uncharacterized protein from Caenorhabditis elegans.